The following is a 341-amino-acid chain: CRISPR-associated endonuclease Cas1 (341 aa).

Mn(2+) is bound by residues glutamate 173, histidine 242, and glutamate 257.

Belongs to the CRISPR-associated endonuclease Cas1 family. Homodimer, forms a heterotetramer with a Cas2 homodimer. The cofactor is Mg(2+). Mn(2+) is required as a cofactor.

Functionally, CRISPR (clustered regularly interspaced short palindromic repeat), is an adaptive immune system that provides protection against mobile genetic elements (viruses, transposable elements and conjugative plasmids). CRISPR clusters contain spacers, sequences complementary to antecedent mobile elements, and target invading nucleic acids. CRISPR clusters are transcribed and processed into CRISPR RNA (crRNA). Acts as a dsDNA endonuclease. Involved in the integration of spacer DNA into the CRISPR cassette. The polypeptide is CRISPR-associated endonuclease Cas1 (Korarchaeum cryptofilum (strain OPF8)).